Here is a 127-residue protein sequence, read N- to C-terminus: Small ribosomal subunit protein uS13 (127 aa).

The protein belongs to the universal ribosomal protein uS13 family. Part of the 30S ribosomal subunit. Forms a loose heterodimer with protein S19. Forms two bridges to the 50S subunit in the 70S ribosome.

Functionally, located at the top of the head of the 30S subunit, it contacts several helices of the 16S rRNA. In the 70S ribosome it contacts the 23S rRNA (bridge B1a) and protein L5 of the 50S subunit (bridge B1b), connecting the 2 subunits; these bridges are implicated in subunit movement. Contacts the tRNAs in the A and P-sites. This is Small ribosomal subunit protein uS13 from Roseiflexus sp. (strain RS-1).